Reading from the N-terminus, the 179-residue chain is ATP synthase subunit delta (179 aa).

Belongs to the ATPase delta chain family. F-type ATPases have 2 components, F(1) - the catalytic core - and F(0) - the membrane proton channel. F(1) has five subunits: alpha(3), beta(3), gamma(1), delta(1), epsilon(1). F(0) has three main subunits: a(1), b(2) and c(10-14). The alpha and beta chains form an alternating ring which encloses part of the gamma chain. F(1) is attached to F(0) by a central stalk formed by the gamma and epsilon chains, while a peripheral stalk is formed by the delta and b chains.

The protein localises to the cell inner membrane. F(1)F(0) ATP synthase produces ATP from ADP in the presence of a proton or sodium gradient. F-type ATPases consist of two structural domains, F(1) containing the extramembraneous catalytic core and F(0) containing the membrane proton channel, linked together by a central stalk and a peripheral stalk. During catalysis, ATP synthesis in the catalytic domain of F(1) is coupled via a rotary mechanism of the central stalk subunits to proton translocation. Functionally, this protein is part of the stalk that links CF(0) to CF(1). It either transmits conformational changes from CF(0) to CF(1) or is implicated in proton conduction. This is ATP synthase subunit delta from Paraburkholderia phytofirmans (strain DSM 17436 / LMG 22146 / PsJN) (Burkholderia phytofirmans).